We begin with the raw amino-acid sequence, 942 residues long: NBPF family member NBPF8 (942 aa).

The stretch at 89 to 130 (AEELRQYKVLVHSQERELTQLKEKLQEGRDASRSLNEHLQAL) forms a coiled coil. The interval 161–203 (KLSPENDEDEDEDVQVEEDEKVQKSSAPREVQKAEESKVPEDS) is disordered. Positions 165–180 (ENDEDEDEDVQVEEDE) are enriched in acidic residues. The region spanning 165 to 259 (ENDEDEDEDV…ECQDALNILS (95 aa)) is the Olduvai 1 domain. A compositionally biased stretch (basic and acidic residues) spans 190-201 (EVQKAEESKVPE). Residues 339-401 (KSMLRNERQF…LSLNEHLQAL (63 aa)) adopt a coiled-coil conformation. 6 Olduvai domains span residues 436–528 (ENDN…HIIP), 529–617 (ENES…ATGP), 620–675 (SREL…VDMD), 676–767 (EIEK…PPCP), 770–843 (SREL…RSKK), and 844–904 (KRRR…RSVF). Disordered regions lie at residues 451–474 (EKVQKSSAPREMQKAEEKEVPEDS) and 528–566 (PENESDDEEEEEKGPVSPRNLQESEEEEVPQESWDEGYS). 2 stretches are compositionally biased toward acidic residues: residues 530–539 (NESDDEEEEE) and 550–562 (ESEEEEVPQESWD). Positions 831 to 849 (GKGKIRRGRRSKKKRRRGR) are enriched in basic residues. The segment at 831–863 (GKGKIRRGRRSKKKRRRGRKEGEEDQNPPCPRL) is disordered.

It belongs to the NBPF family. Expressed in the mammary gland.

It is found in the cytoplasm. The sequence is that of NBPF family member NBPF8 from Homo sapiens (Human).